We begin with the raw amino-acid sequence, 645 residues long: 1,4-alpha-glucan branching enzyme GlgB (645 aa).

The active-site Nucleophile is the aspartate 309. Catalysis depends on glutamate 352, which acts as the Proton donor. A disordered region spans residues 619 to 645 (VKTRKGSKKQDGSKTKVRSNVTSRGKR). Residues 636-645 (RSNVTSRGKR) are compositionally biased toward polar residues.

It belongs to the glycosyl hydrolase 13 family. GlgB subfamily. Monomer.

It catalyses the reaction Transfers a segment of a (1-&gt;4)-alpha-D-glucan chain to a primary hydroxy group in a similar glucan chain.. It participates in glycan biosynthesis; glycogen biosynthesis. Functionally, catalyzes the formation of the alpha-1,6-glucosidic linkages in glycogen by scission of a 1,4-alpha-linked oligosaccharide from growing alpha-1,4-glucan chains and the subsequent attachment of the oligosaccharide to the alpha-1,6 position. This Bacillus cereus (strain ATCC 14579 / DSM 31 / CCUG 7414 / JCM 2152 / NBRC 15305 / NCIMB 9373 / NCTC 2599 / NRRL B-3711) protein is 1,4-alpha-glucan branching enzyme GlgB.